The following is a 381-amino-acid chain: L-lactate dehydrogenase (381 aa).

One can recognise an FMN hydroxy acid dehydrogenase domain in the interval 1–380; it reads MIISASTDYR…SADSLVRELG (380 aa). Y24 lines the substrate pocket. FMN-binding residues include S106 and Q127. Residue Y129 coordinates substrate. Residue T155 participates in FMN binding. Position 164 (R164) interacts with substrate. Residue K251 participates in FMN binding. H275 (proton acceptor) is an active-site residue. R278 contributes to the substrate binding site. 306 to 330 contributes to the FMN binding site; it reads DSGIRTGLDVVRMIALGADSVLLGR.

This sequence belongs to the FMN-dependent alpha-hydroxy acid dehydrogenase family. As to quaternary structure, homotetramer. Requires FMN as cofactor.

It localises to the cell inner membrane. It carries out the reaction (S)-lactate + A = pyruvate + AH2. Functionally, catalyzes the conversion of L-lactate to pyruvate. Is coupled to the respiratory chain. The protein is L-lactate dehydrogenase of Pseudomonas aeruginosa (strain LESB58).